A 221-amino-acid polypeptide reads, in one-letter code: Glutathione S-transferase U25 (221 aa).

Position 2 is an N-acetylalanine (Ala-2). A GST N-terminal domain is found at 3 to 82 (DEVILLDFWP…YIDEVWPSKT (80 aa)). Residues 13-14 (SM), 39-40 (NK), 53-54 (KI), and 66-67 (ES) each bind glutathione. One can recognise a GST C-terminal domain in the interval 88 to 208 (DPYQRAQAKF…LPDSEKIIKF (121 aa)). Thr-149 carries the post-translational modification Phosphothreonine.

This sequence belongs to the GST superfamily. Tau family.

Its subcellular location is the cytoplasm. The protein localises to the cytosol. It carries out the reaction RX + glutathione = an S-substituted glutathione + a halide anion + H(+). Functionally, may be involved in the conjugation of reduced glutathione to a wide number of exogenous and endogenous hydrophobic electrophiles and have a detoxification role against certain herbicides. The protein is Glutathione S-transferase U25 (GSTU25) of Arabidopsis thaliana (Mouse-ear cress).